A 414-amino-acid chain; its full sequence is Serine/threonine transporter SstT (414 aa).

Residues 2–15 are Cytoplasmic-facing; it reads TTQRSPGLFRRLAH. Residues 16–36 traverse the membrane as a helical segment; the sequence is GSLVKQILVGLVLGILLAWIS. Residues 37–45 lie on the Periplasmic side of the membrane; it reads KPAAEAVGL. Residues 46 to 66 traverse the membrane as a helical segment; that stretch reads LGTLFVGALKAVAPILVLMLV. The Cytoplasmic segment spans residues 67-83; the sequence is MASIANHQHGQKTNILP. The chain crosses the membrane as a helical span at residues 84 to 104; sequence ILFLYLLGTFSAALAAVVFSF. Residues 105–142 are Periplasmic-facing; it reads AFPSTLHLSSSAGDISPPSGIVEVMRGLVMSMVSNPID. Residues 143–163 form a helical membrane-spanning segment; the sequence is ALLKGNYIGILVWAIGLGFAL. At 164-179 the chain is on the cytoplasmic side; the sequence is RHGNETTKNLVNDMSN. Residues 180–200 form a helical membrane-spanning segment; that stretch reads AVTFMVKLVIRFAPIGIFGLV. Residues 201–217 are Periplasmic-facing; the sequence is SSTLATTGFSTLWGYAQ. A helical membrane pass occupies residues 218 to 238; that stretch reads LLVVLVGCMLLVALVVNPLLV. Residues 239-299 lie on the Cytoplasmic side of the membrane; sequence WWKIRRNPFP…VSIPLGATIN (61 aa). The helical transmembrane segment at 300–320 threads the bilayer; sequence MAGAAITITVLTLAAVNTLGI. Residues 321 to 331 are Periplasmic-facing; it reads PVDLPTALLLS. A helical membrane pass occupies residues 332-352; sequence VVASLCACGASGVAGGSLLLI. Over 353 to 414 the chain is Cytoplasmic; that stretch reads PLACNMFGIS…DRLANSALRN (62 aa).

The protein belongs to the dicarboxylate/amino acid:cation symporter (DAACS) (TC 2.A.23) family.

Its subcellular location is the cell inner membrane. The catalysed reaction is L-serine(in) + Na(+)(in) = L-serine(out) + Na(+)(out). It carries out the reaction L-threonine(in) + Na(+)(in) = L-threonine(out) + Na(+)(out). Functionally, involved in the import of serine and threonine into the cell, with the concomitant import of sodium (symport system). The polypeptide is Serine/threonine transporter SstT (Shigella dysenteriae serotype 1 (strain Sd197)).